The primary structure comprises 692 residues: Structure-specific endonuclease subunit SLX4 (692 aa).

The disordered stretch occupies residues 39-59 (SDDEDQDEEQETEIPPEEGDD).

The protein belongs to the SLX4 family. Forms a heterodimer with SLX1. Post-translationally, phosphorylated in response to DNA damage.

It is found in the nucleus. Its function is as follows. Regulatory subunit of the SLX1-SLX4 structure-specific endonuclease that resolves DNA secondary structures generated during DNA repair and recombination. Has endonuclease activity towards branched DNA substrates, introducing single-strand cuts in duplex DNA close to junctions with ss-DNA. The polypeptide is Structure-specific endonuclease subunit SLX4 (Kluyveromyces lactis (strain ATCC 8585 / CBS 2359 / DSM 70799 / NBRC 1267 / NRRL Y-1140 / WM37) (Yeast)).